The primary structure comprises 291 residues: N-acetylmannosamine kinase (291 aa).

ATP-binding positions include 5–12 and 132–139; these read AIDIGGTK and GVGGGVVS. His-156, Cys-166, Cys-168, and Cys-173 together coordinate Zn(2+).

Belongs to the ROK (NagC/XylR) family. NanK subfamily. In terms of assembly, homodimer.

The enzyme catalyses an N-acyl-D-mannosamine + ATP = an N-acyl-D-mannosamine 6-phosphate + ADP + H(+). It participates in amino-sugar metabolism; N-acetylneuraminate degradation; D-fructose 6-phosphate from N-acetylneuraminate: step 2/5. Its function is as follows. Catalyzes the phosphorylation of N-acetylmannosamine (ManNAc) to ManNAc-6-P. This chain is N-acetylmannosamine kinase, found in Escherichia coli O9:H4 (strain HS).